The chain runs to 60 residues: Metallothionein A (60 aa).

Residues M1–C28 form a beta region. 20 residues coordinate a divalent metal cation: C4, C6, C12, C14, C18, C20, C23, C25, C28, C32, C33, C35, C36, C40, C43, C47, C49, C54, C58, and C59. The alpha stretch occupies residues K29–Q60.

It belongs to the metallothionein superfamily. Type 1 family.

Its function is as follows. Metallothioneins have a high content of cysteine residues that bind various heavy metals. The protein is Metallothionein A (mta) of Chaenocephalus aceratus (Blackfin icefish).